The primary structure comprises 234 residues: MDYTPRLQPARLIKRYKRFLADVVTPEGETLTLHCANTGAMTGCATPGDTVWYSTSDNPKRKYPQSWELTETQQNHWICVNTLRANTLLYEALLENRIEELAGYSDIKTEVKYGTENSRIDLLLQAPDRIDCYIEVKSVTLLQHECGYFPDAVTLRGQKHLRELQQMVSNGKRAVLFFAVLHSGIQQVSPARHIDSRYAELFIEAQQAGVEILCYGSTLCPDGIKLTNKLPLLG.

This sequence belongs to the SfsA family.

The polypeptide is Sugar fermentation stimulation protein homolog (Pectobacterium atrosepticum (strain SCRI 1043 / ATCC BAA-672) (Erwinia carotovora subsp. atroseptica)).